A 493-amino-acid polypeptide reads, in one-letter code: Argininosuccinate lyase (493 aa).

This sequence belongs to the lyase 1 family. Argininosuccinate lyase subfamily.

It localises to the cytoplasm. It catalyses the reaction 2-(N(omega)-L-arginino)succinate = fumarate + L-arginine. The protein operates within amino-acid biosynthesis; L-arginine biosynthesis; L-arginine from L-ornithine and carbamoyl phosphate: step 3/3. In Clavibacter sepedonicus (Clavibacter michiganensis subsp. sepedonicus), this protein is Argininosuccinate lyase.